The following is a 454-amino-acid chain: Bifunctional protein GlmU (454 aa).

The tract at residues 1–228 (MTLPLHVVIL…PQDVEGANDP (228 aa)) is pyrophosphorylase. Residues 10–13 (LAAG), lysine 24, glutamine 76, 81–82 (GT), 103–105 (YGD), glycine 138, glutamate 153, asparagine 168, and asparagine 226 contribute to the UDP-N-acetyl-alpha-D-glucosamine site. A Mg(2+)-binding site is contributed by aspartate 105. Asparagine 226 lines the Mg(2+) pocket. The segment at 229–249 (WQLAQLERAWQLRAARALCLQ) is linker. An N-acetyltransferase region spans residues 250 to 454 (GVRMADPARV…IEGWERPKKK (205 aa)). UDP-N-acetyl-alpha-D-glucosamine is bound by residues arginine 332 and lysine 350. Catalysis depends on histidine 362, which acts as the Proton acceptor. Residues tyrosine 365 and asparagine 376 each contribute to the UDP-N-acetyl-alpha-D-glucosamine site. Acetyl-CoA is bound by residues alanine 379, 385-386 (NY), serine 404, alanine 422, and arginine 439.

It in the N-terminal section; belongs to the N-acetylglucosamine-1-phosphate uridyltransferase family. In the C-terminal section; belongs to the transferase hexapeptide repeat family. Homotrimer. Mg(2+) is required as a cofactor.

It localises to the cytoplasm. The catalysed reaction is alpha-D-glucosamine 1-phosphate + acetyl-CoA = N-acetyl-alpha-D-glucosamine 1-phosphate + CoA + H(+). It catalyses the reaction N-acetyl-alpha-D-glucosamine 1-phosphate + UTP + H(+) = UDP-N-acetyl-alpha-D-glucosamine + diphosphate. It functions in the pathway nucleotide-sugar biosynthesis; UDP-N-acetyl-alpha-D-glucosamine biosynthesis; N-acetyl-alpha-D-glucosamine 1-phosphate from alpha-D-glucosamine 6-phosphate (route II): step 2/2. The protein operates within nucleotide-sugar biosynthesis; UDP-N-acetyl-alpha-D-glucosamine biosynthesis; UDP-N-acetyl-alpha-D-glucosamine from N-acetyl-alpha-D-glucosamine 1-phosphate: step 1/1. Its pathway is bacterial outer membrane biogenesis; LPS lipid A biosynthesis. Functionally, catalyzes the last two sequential reactions in the de novo biosynthetic pathway for UDP-N-acetylglucosamine (UDP-GlcNAc). The C-terminal domain catalyzes the transfer of acetyl group from acetyl coenzyme A to glucosamine-1-phosphate (GlcN-1-P) to produce N-acetylglucosamine-1-phosphate (GlcNAc-1-P), which is converted into UDP-GlcNAc by the transfer of uridine 5-monophosphate (from uridine 5-triphosphate), a reaction catalyzed by the N-terminal domain. The chain is Bifunctional protein GlmU from Xanthomonas campestris pv. campestris (strain 8004).